Reading from the N-terminus, the 172-residue chain is C-phycocyanin beta chain (172 aa).

Asn72 carries the N4-methylasparagine modification. Residues Cys82 and Cys153 each coordinate (2R,3E)-phycocyanobilin.

Belongs to the phycobiliprotein family. In terms of assembly, heterodimer of an alpha and a beta subunit, which further assembles into trimers and the trimers into hexamers. The basic functional unit of phycobiliproteins is a ring-shaped hexamer formed from two back-to-back trimers contacting via the alpha chain subunits. The trimers are composed of alpha/beta subunit heterodimers arranged around a three-fold axis of symmetry. The phycoerythrins also contain a gamma subunit which is located in the center of the hexamer. Post-translationally, contains two covalently linked bilin chromophores.

The protein localises to the plastid. It localises to the chloroplast thylakoid membrane. Its function is as follows. Light-harvesting photosynthetic bile pigment-protein from the phycobiliprotein complex (phycobilisome, PBS). Phycocyanin is the major phycobiliprotein in the PBS rod. The polypeptide is C-phycocyanin beta chain (cpcB) (Pyropia yezoensis (Susabi-nori)).